The following is a 674-amino-acid chain: Transcription activator of gluconeogenesis PMAA_028970 (674 aa).

Residues 1–46 (MMDTDKDDLPSATDHSEHESGDAVKVEGGASKTASNSKDPSRPRRK) form a disordered region. The segment covering 14 to 25 (DHSEHESGDAVK) has biased composition (basic and acidic residues). A DNA-binding region (zn(2)-C6 fungal-type) is located at residues 52 to 80 (CFACQRAHLTCGDERPCQRCIKRGLQDAC). 4 disordered regions span residues 117-181 (ISPT…ATPA), 250-321 (TGAG…SGLY), 344-374 (IGSNTFASPSSTTSPHATTIAPSQFDDSPMK), and 519-557 (NLNVNTGGGNNTSSQSDSTSSSIRGGAGGRMRNQEPGPN). A compositionally biased stretch (polar residues) spans 120-148 (TEYTQNGTNNAQQQQQKSGTIYASSTPSY). The span at 149 to 163 (NNNNGTFDTNNATNT) shows a compositional bias: low complexity. Composition is skewed to polar residues over residues 269-278 (GQRSNSQQFG) and 285-294 (TTESPSQQSF). 2 stretches are compositionally biased toward low complexity: residues 348 to 366 (TFASPSSTTSPHATTIAPS) and 529 to 540 (NTSSQSDSTSSS).

It belongs to the ERT1/acuK family.

The protein localises to the nucleus. Transcription factor which regulates nonfermentable carbon utilization. Activator of gluconeogenetic genes. This chain is Transcription activator of gluconeogenesis PMAA_028970, found in Talaromyces marneffei (strain ATCC 18224 / CBS 334.59 / QM 7333) (Penicillium marneffei).